A 142-amino-acid chain; its full sequence is Small ribosomal subunit protein bS6 (142 aa).

The interval 103–142 (KAAESREQRAPRGEDRPARVVADDVDDSDDDTDDEDSNDE) is disordered. Positions 105-124 (AESREQRAPRGEDRPARVVA) are enriched in basic and acidic residues. Over residues 125 to 142 (DDVDDSDDDTDDEDSNDE) the composition is skewed to acidic residues.

The protein belongs to the bacterial ribosomal protein bS6 family.

Its function is as follows. Binds together with bS18 to 16S ribosomal RNA. This chain is Small ribosomal subunit protein bS6, found in Hahella chejuensis (strain KCTC 2396).